The following is a 634-amino-acid chain: Threonine--tRNA ligase (634 aa).

The TGS domain occupies 1-61 (MFEVKLKDGS…DSDCEVQFVK (61 aa)). Residues 242–532 (DHRKIGKEMG…LIEHYAGKFP (291 aa)) are catalytic. The Zn(2+) site is built by Cys-333, His-384, and His-509.

It belongs to the class-II aminoacyl-tRNA synthetase family. As to quaternary structure, homodimer. The cofactor is Zn(2+).

The protein resides in the cytoplasm. It catalyses the reaction tRNA(Thr) + L-threonine + ATP = L-threonyl-tRNA(Thr) + AMP + diphosphate + H(+). Functionally, catalyzes the attachment of threonine to tRNA(Thr) in a two-step reaction: L-threonine is first activated by ATP to form Thr-AMP and then transferred to the acceptor end of tRNA(Thr). Also edits incorrectly charged L-seryl-tRNA(Thr). In Finegoldia magna (strain ATCC 29328 / DSM 20472 / WAL 2508) (Peptostreptococcus magnus), this protein is Threonine--tRNA ligase.